The primary structure comprises 354 residues: Ion-translocating oxidoreductase complex subunit D (354 aa).

The next 4 helical transmembrane spans lie at 19–39 (IMLL…YYFG), 40–60 (FGVL…EFLV), 77–99 (AAVT…LSFF), and 119–139 (IFNP…ILMT). Threonine 187 is modified (FMN phosphoryl threonine). The next 5 membrane-spanning stretches (helical) occupy residues 221 to 241 (WISI…FNVI), 245 to 265 (IPVS…YFFK), 268 to 288 (MYYP…FFIA), 295 to 315 (SITK…IWLI), and 319 to 339 (GNYP…VPLI).

It belongs to the NqrB/RnfD family. The complex is composed of six subunits: RnfA, RnfB, RnfC, RnfD, RnfE and RnfG. The cofactor is FMN.

The protein localises to the cell inner membrane. In terms of biological role, part of a membrane-bound complex that couples electron transfer with translocation of ions across the membrane. The polypeptide is Ion-translocating oxidoreductase complex subunit D (Buchnera aphidicola subsp. Baizongia pistaciae (strain Bp)).